A 559-amino-acid polypeptide reads, in one-letter code: Poly(U)-binding-splicing factor PUF60 (559 aa).

The interval 1–516 is inhibits homodimerization; sequence MATATIALQV…EDAEIIVKIF (516 aa). Residues glutamine 14 and lysine 43 each participate in a glycyl lysine isopeptide (Lys-Gly) (interchain with G-Cter in SUMO2) cross-link. Threonine 60 carries the phosphothreonine modification. Residues 77–559 are inhibits transcriptional repression, interaction with ERCC3 and apoptosis induction; the sequence is QSIKSVLVKQ…ERFDNSDLSA (483 aa). Lysine 80 is covalently cross-linked (Glycyl lysine isopeptide (Lys-Gly) (interchain with G-Cter in SUMO2)). Serine 112 is subject to Phosphoserine. 2 RRM domains span residues 129 to 207 and 226 to 304; these read CRVY…RPSN and NRIY…KAVT. At serine 244 the chain carries Phosphoserine. Lysine 251 bears the N6-acetyllysine mark. A Phosphothreonine modification is found at threonine 314. Residues 416-437 are disordered; it reads KKEKEEEELFPESERPEMLSEQ. Lysine 419 participates in a covalent cross-link: Glycyl lysine isopeptide (Lys-Gly) (interchain with G-Cter in SUMO2). A compositionally biased stretch (basic and acidic residues) spans 427 to 437; that stretch reads ESERPEMLSEQ. At lysine 454 the chain carries N6-acetyllysine. A Glycyl lysine isopeptide (Lys-Gly) (interchain with G-Cter in SUMO2) cross-link involves residue lysine 458. Residues 462 to 549 enclose the RRM 3; atypical domain; sequence TVMVLRNMVD…RKVVAEVYDQ (88 aa).

The protein belongs to the RRM half pint family. In terms of assembly, homodimer. Associates with the spliceosome. Found in a complex with RO60 and Y5 RNA. Found in a complex with FUBP1 and far upstream element (FUSE) DNA segment. Interacts directly with ERCC3. Interacts with CDK7 and GTF2H1. Interacts with SRSF11/P54. Does not interact with ERCC3 in xeroderma pigmentosum complementation group B (XPB) cells. Interacts with ARGLU1; interaction may be involved in ARGLU1-mediated modulation of alternative splicing. Isoform 2 is expressed in colonic epithelium and colorectal epithelium cancer (at protein level). Isoform 6 is expressed in colorectal epithelial cancer but below detection level in colonic epithelium. Expressed in heart, brain, placenta, lung, liver, skeletal muscle, kidney, pancreas, spleen, thymus, prostate, testis, ovary, small intestine, colon and peripheral blood leukocytes.

It localises to the nucleus. DNA- and RNA-binding protein, involved in several nuclear processes such as pre-mRNA splicing, apoptosis and transcription regulation. In association with FUBP1 regulates MYC transcription at the P2 promoter through the core-TFIIH basal transcription factor. Acts as a transcriptional repressor through the core-TFIIH basal transcription factor. Represses FUBP1-induced transcriptional activation but not basal transcription. Decreases ERCC3 helicase activity. Does not repress TFIIH-mediated transcription in xeroderma pigmentosum complementation group B (XPB) cells. Is also involved in pre-mRNA splicing. Promotes splicing of an intron with weak 3'-splice site and pyrimidine tract in a cooperative manner with U2AF2. Involved in apoptosis induction when overexpressed in HeLa cells. Isoform 6 failed to repress MYC transcription and inhibited FIR-induced apoptosis in colorectal cancer. Isoform 6 may contribute to tumor progression by enabling increased MYC expression and greater resistance to apoptosis in tumors than in normal cells. Modulates alternative splicing of several mRNAs. Binds to relaxed DNA of active promoter regions. Binds to the pyrimidine tract and 3'-splice site regions of pre-mRNA; binding is enhanced in presence of U2AF2. Binds to Y5 RNA in association with RO60. Binds to poly(U) RNA. The chain is Poly(U)-binding-splicing factor PUF60 from Homo sapiens (Human).